Consider the following 248-residue polypeptide: Probable transcriptional regulatory protein Smed_2641 (248 aa).

Belongs to the TACO1 family.

It is found in the cytoplasm. This Sinorhizobium medicae (strain WSM419) (Ensifer medicae) protein is Probable transcriptional regulatory protein Smed_2641.